Here is a 404-residue protein sequence, read N- to C-terminus: S-adenosylmethionine synthase (404 aa).

An ATP-binding site is contributed by H17. D19 is a binding site for Mg(2+). E45 contacts K(+). Positions 58 and 101 each coordinate L-methionine. The flexible loop stretch occupies residues Q101 to R111. Residues D172 to K174, R245 to F246, D254, R260 to K261, A277, and K281 contribute to the ATP site. D254 provides a ligand contact to L-methionine. An L-methionine-binding site is contributed by K285.

Belongs to the AdoMet synthase family. In terms of assembly, homotetramer; dimer of dimers. Mg(2+) is required as a cofactor. Requires K(+) as cofactor.

It localises to the cytoplasm. The enzyme catalyses L-methionine + ATP + H2O = S-adenosyl-L-methionine + phosphate + diphosphate. It functions in the pathway amino-acid biosynthesis; S-adenosyl-L-methionine biosynthesis; S-adenosyl-L-methionine from L-methionine: step 1/1. In terms of biological role, catalyzes the formation of S-adenosylmethionine (AdoMet) from methionine and ATP. The overall synthetic reaction is composed of two sequential steps, AdoMet formation and the subsequent tripolyphosphate hydrolysis which occurs prior to release of AdoMet from the enzyme. This chain is S-adenosylmethionine synthase, found in Chlorobium luteolum (strain DSM 273 / BCRC 81028 / 2530) (Pelodictyon luteolum).